Reading from the N-terminus, the 243-residue chain is Pyridoxine 5'-phosphate synthase (243 aa).

3-amino-2-oxopropyl phosphate is bound at residue asparagine 9. 11 to 12 serves as a coordination point for 1-deoxy-D-xylulose 5-phosphate; sequence DH. Arginine 20 is a 3-amino-2-oxopropyl phosphate binding site. Residue histidine 45 is the Proton acceptor of the active site. 2 residues coordinate 1-deoxy-D-xylulose 5-phosphate: arginine 47 and histidine 52. Glutamate 72 (proton acceptor) is an active-site residue. Threonine 102 is a 1-deoxy-D-xylulose 5-phosphate binding site. Histidine 193 acts as the Proton donor in catalysis. 3-amino-2-oxopropyl phosphate-binding positions include glycine 194 and 215 to 216; that span reads GH.

It belongs to the PNP synthase family. As to quaternary structure, homooctamer; tetramer of dimers.

The protein resides in the cytoplasm. The catalysed reaction is 3-amino-2-oxopropyl phosphate + 1-deoxy-D-xylulose 5-phosphate = pyridoxine 5'-phosphate + phosphate + 2 H2O + H(+). Its pathway is cofactor biosynthesis; pyridoxine 5'-phosphate biosynthesis; pyridoxine 5'-phosphate from D-erythrose 4-phosphate: step 5/5. In terms of biological role, catalyzes the complicated ring closure reaction between the two acyclic compounds 1-deoxy-D-xylulose-5-phosphate (DXP) and 3-amino-2-oxopropyl phosphate (1-amino-acetone-3-phosphate or AAP) to form pyridoxine 5'-phosphate (PNP) and inorganic phosphate. The sequence is that of Pyridoxine 5'-phosphate synthase from Photobacterium profundum (strain SS9).